We begin with the raw amino-acid sequence, 425 residues long: Cyanogenic beta-glucosidase (425 aa).

The N-terminal stretch at 1–11 (LLSITTTHIHA) is a signal peptide. A beta-D-glucoside-binding positions include Q44, H148, and 193–194 (NE). Catalysis depends on E194, which acts as the Proton donor. C213 and C221 form a disulfide bridge. N220 is a glycosylation site (N-linked (GlcNAc...) asparagine). 2 residues coordinate a beta-D-glucoside: Y337 and E408. Catalysis depends on E408, which acts as the Nucleophile. A glycan (N-linked (GlcNAc...) asparagine) is linked at N412.

Belongs to the glycosyl hydrolase 1 family. In terms of assembly, homodimer. Leaves.

The enzyme catalyses Hydrolysis of terminal, non-reducing beta-D-glucosyl residues with release of beta-D-glucose.. Its function is as follows. Hydrolyzes cyanoglucosides, contributing to the release of hydrocyanic acid, which functions as a defense mechanism against small predators, when the leaf tissue is damaged. The sequence is that of Cyanogenic beta-glucosidase (LI) from Trifolium repens (Creeping white clover).